The sequence spans 84 residues: Anaphase-promoting complex subunit 11 (84 aa).

The Zn(2+) site is built by cysteine 23, cysteine 26, cysteine 34, cysteine 37, cysteine 44, cysteine 51, histidine 53, histidine 56, histidine 58, cysteine 59, cysteine 73, and cysteine 76. The segment at cysteine 34–arginine 77 adopts an RING-type zinc-finger fold.

It belongs to the RING-box family. The mammalian APC/C is composed at least of 14 distinct subunits ANAPC1, ANAPC2, CDC27/APC3, ANAPC4, ANAPC5, CDC16/APC6, ANAPC7, CDC23/APC8, ANAPC10, ANAPC11, CDC26/APC12, ANAPC13, ANAPC15 and ANAPC16 that assemble into a complex of at least 19 chains with a combined molecular mass of around 1.2 MDa; APC/C interacts with FZR1 and FBXO5. Interacts with the cullin domain of ANAPC2. Interacts with UBE2D2. Auto-ubiquitinated.

It localises to the cytoplasm. The protein localises to the nucleus. The protein operates within protein modification; protein ubiquitination. In terms of biological role, together with the cullin protein ANAPC2, constitutes the catalytic component of the anaphase promoting complex/cyclosome (APC/C), a cell cycle-regulated E3 ubiquitin ligase that controls progression through mitosis and the G1 phase of the cell cycle. The APC/C complex acts by mediating ubiquitination and subsequent degradation of target proteins: it mainly mediates the formation of 'Lys-11'-linked polyubiquitin chains and, to a lower extent, the formation of 'Lys-48'- and 'Lys-63'-linked polyubiquitin chains. The APC/C complex catalyzes assembly of branched 'Lys-11'-/'Lys-48'-linked branched ubiquitin chains on target proteins. May recruit the E2 ubiquitin-conjugating enzymes to the complex. The sequence is that of Anaphase-promoting complex subunit 11 (Anapc11) from Mus musculus (Mouse).